A 422-amino-acid chain; its full sequence is Putative polyketide beta-ketoacyl synthase 1 (422 aa).

The region spanning 2–416 (SRRVVVTGIG…GFQSAVVLTG (415 aa)) is the Ketosynthase family 3 (KS3) domain. Catalysis depends on for beta-ketoacyl synthase activity residues Cys169, His309, and His346.

Belongs to the thiolase-like superfamily. Beta-ketoacyl-ACP synthases family.

In terms of biological role, involved in developmentally regulated synthesis of a compound biosynthetically related to polyketide antibiotics which is essential for spore color in Streptomyces halstedii. The chain is Putative polyketide beta-ketoacyl synthase 1 (sch1) from Streptomyces halstedii.